Consider the following 630-residue polypeptide: MDLTQIQNPSFLKDMSISELEELSEDIRKFLIEELSQTGGHIAPNLGVVELTIALHTLFDSPKDKFLWDVGHQSYVHKILTGRAKEFRTLRQYKGLCGFPKRCESEHDVWETGHSSTSLSAAMGMALARDLKKTDEYVIPIIGDGALTGGMALEALNHIGHEKTDMIVILNDNEMSIAPNVGALHNVLGRLRTAGKYQWVKDELEYILKKIPAVGGKVAATAEKIKDSLKYLLVSGVFFEELGFTYLGPVDGHDYEKLFETLQYAKKTKGPVLVHVITKKGKGYKPAESDVIGTWHGTGPYKIESGDFVKPKEVAPAWSAVVSETVRKLARVDERIVAITPAMPVGSKLEKFHQEFPNRMIDVGIAEQHATTMAAGMATQGMKPFLAIYSTFLQRAYDQVVHDICRQNLNVFIGIDRSGLVGADGETHQGVFDIAFLRHLPNIVLMMPKDENEGQHLVYTAMQYEDGPIALRYPRGNGLGVPMDDEFKVIPIGTWETLREGTQAAIVTFGTTIPMAMEAAERLGKAGVSVKVVNARFIKPMDEAYLHDLLGKNIPILTIEEACLIGGFGSGVMEFAAEHGYHSALIERMGIPDYFIEHGSVTKLLEEIGLTTDAVVDRIHTMIPSKQKRA.

Residues H72 and 113-115 (GHS) contribute to the thiamine diphosphate site. D144 is a binding site for Mg(2+). Residues 145–146 (GA), N173, Y284, and E367 contribute to the thiamine diphosphate site. N173 provides a ligand contact to Mg(2+).

This sequence belongs to the transketolase family. DXPS subfamily. Homodimer. Mg(2+) is required as a cofactor. Thiamine diphosphate serves as cofactor.

The enzyme catalyses D-glyceraldehyde 3-phosphate + pyruvate + H(+) = 1-deoxy-D-xylulose 5-phosphate + CO2. It functions in the pathway metabolic intermediate biosynthesis; 1-deoxy-D-xylulose 5-phosphate biosynthesis; 1-deoxy-D-xylulose 5-phosphate from D-glyceraldehyde 3-phosphate and pyruvate: step 1/1. Functionally, catalyzes the acyloin condensation reaction between C atoms 2 and 3 of pyruvate and glyceraldehyde 3-phosphate to yield 1-deoxy-D-xylulose-5-phosphate (DXP). This is 1-deoxy-D-xylulose-5-phosphate synthase from Bacillus cytotoxicus (strain DSM 22905 / CIP 110041 / 391-98 / NVH 391-98).